A 318-amino-acid polypeptide reads, in one-letter code: Transaldolase (318 aa).

Lys132 (schiff-base intermediate with substrate) is an active-site residue.

This sequence belongs to the transaldolase family. Type 1 subfamily. Homodimer.

The protein resides in the cytoplasm. It catalyses the reaction D-sedoheptulose 7-phosphate + D-glyceraldehyde 3-phosphate = D-erythrose 4-phosphate + beta-D-fructose 6-phosphate. Its pathway is carbohydrate degradation; pentose phosphate pathway; D-glyceraldehyde 3-phosphate and beta-D-fructose 6-phosphate from D-ribose 5-phosphate and D-xylulose 5-phosphate (non-oxidative stage): step 2/3. In terms of biological role, transaldolase is important for the balance of metabolites in the pentose-phosphate pathway. The chain is Transaldolase from Shewanella putrefaciens (strain CN-32 / ATCC BAA-453).